A 114-amino-acid chain; its full sequence is Cyclin-dependent kinase 2-associated protein 1 (114 aa).

Residues 18-57 (AGSVHSPSTSMATSSQYRQLLSDYGPPSLGYTQGTGNSQV) form a disordered region. The segment at 19–24 (GSVHSP) is interaction with CDK2AP2. Polar residues predominate over residues 20-36 (SVHSPSTSMATSSQYRQ). Residue S45 is modified to Phosphoserine; by IKKE. Residues 47-57 (GYTQGTGNSQV) are compositionally biased toward polar residues.

The protein belongs to the CDK2AP family. In terms of assembly, homodimer. Component of the nucleosome remodeling and deacetylase (NuRD) repressor complex, composed of core proteins MTA1, MTA2, MTA3, RBBP4, RBBP7, HDAC1, HDAC2, MBD2, MBD3, and peripherally associated proteins CDK2AP1, CDK2AP2, GATAD2A, GATAD2B, CHD3, CHD4 and CHD5. The exact stoichiometry of the NuRD complex is unknown, and some subunits such as MBD2 and MBD3, GATAD2A and GATAD2B, and CHD3, CHD4 and CHD5 define mutually exclusive NuRD complexes. Interacts with monomeric unphosphorylated CDK2. Interacts with CDK2AP2. Interacts with GATAD2A. Interacts with HDAC1. Interacts with HDAC2. Interacts with MBD2. Interacts with MBD3. Interacts with RBBP4. Interacts with RBBP7. In terms of processing, phosphorylated in vitro by IKBKE at Ser-45.

It is found in the nucleus. It localises to the chromosome. Functionally, inhibitor of cyclin-dependent kinase CDK2. Also acts as a component of the histone deacetylase NuRD complex which participates in the remodeling of chromatin. The polypeptide is Cyclin-dependent kinase 2-associated protein 1 (Cdk2ap1) (Mus musculus (Mouse)).